A 356-amino-acid chain; its full sequence is Dihydroorotate dehydrogenase (quinone) (356 aa).

Residues 66–70 (AGFDK) and T90 each bind FMN. K70 serves as a coordination point for substrate. 115-119 (NRMGF) contributes to the substrate binding site. FMN-binding residues include N143 and N176. N176 provides a ligand contact to substrate. The Nucleophile role is filled by S179. N181 serves as a coordination point for substrate. FMN-binding residues include K212 and T240. 241–242 (NT) serves as a coordination point for substrate. FMN-binding positions include G264, G293, and 314–315 (YT).

The protein belongs to the dihydroorotate dehydrogenase family. Type 2 subfamily. Monomer. It depends on FMN as a cofactor.

It localises to the cell membrane. The catalysed reaction is (S)-dihydroorotate + a quinone = orotate + a quinol. Its pathway is pyrimidine metabolism; UMP biosynthesis via de novo pathway; orotate from (S)-dihydroorotate (quinone route): step 1/1. Its function is as follows. Catalyzes the conversion of dihydroorotate to orotate with quinone as electron acceptor. The chain is Dihydroorotate dehydrogenase (quinone) (pyrD) from Mycobacterium leprae (strain TN).